The following is a 254-amino-acid chain: tRNA (guanine-N(7)-)-methyltransferase (254 aa).

Basic and acidic residues predominate over residues 1-11 (MSISDNSREEL). Residues 1–25 (MSISDNSREELGELPAGRPLQSEFN) form a disordered region. S-adenosyl-L-methionine contacts are provided by Glu-83, Glu-108, Asp-135, and Asp-158. Asp-158 is an active-site residue. Lys-162 lines the substrate pocket. The interval 164–169 (RHNKRR) is interaction with RNA. Residues Asp-194 and 232 to 235 (TKFE) each bind substrate.

This sequence belongs to the class I-like SAM-binding methyltransferase superfamily. TrmB family.

The catalysed reaction is guanosine(46) in tRNA + S-adenosyl-L-methionine = N(7)-methylguanosine(46) in tRNA + S-adenosyl-L-homocysteine. The protein operates within tRNA modification; N(7)-methylguanine-tRNA biosynthesis. Functionally, catalyzes the formation of N(7)-methylguanine at position 46 (m7G46) in tRNA. In Corynebacterium efficiens (strain DSM 44549 / YS-314 / AJ 12310 / JCM 11189 / NBRC 100395), this protein is tRNA (guanine-N(7)-)-methyltransferase.